Reading from the N-terminus, the 238-residue chain is Uridylate kinase (238 aa).

An ATP-binding site is contributed by 12 to 15 (KLSG). Glycine 54 serves as a coordination point for UMP. Residues glycine 55 and arginine 59 each contribute to the ATP site. Residues aspartate 74 and 135-142 (TGNPFFTT) contribute to the UMP site. Threonine 162, tyrosine 168, and aspartate 171 together coordinate ATP.

Belongs to the UMP kinase family. In terms of assembly, homohexamer.

It is found in the cytoplasm. The enzyme catalyses UMP + ATP = UDP + ADP. Its pathway is pyrimidine metabolism; CTP biosynthesis via de novo pathway; UDP from UMP (UMPK route): step 1/1. With respect to regulation, inhibited by UTP. In terms of biological role, catalyzes the reversible phosphorylation of UMP to UDP. The polypeptide is Uridylate kinase (Herminiimonas arsenicoxydans).